Here is an 82-residue protein sequence, read N- to C-terminus: U6 snRNA-associated Sm-like protein LSm6 (82 aa).

In terms of domain architecture, Sm spans 13 to 82 (DPSGFLSEII…GNNVMYISAD (70 aa)).

The protein belongs to the snRNP Sm proteins family. SmF/LSm6 subfamily. Component of the heptameric LSM1-LSM7 complex, which consists of snr-1/lsm1, snr-2/lsm2, snr-3/lsm3, snr-4/lsm4, snr-5/lsm5, snr-6/lsm6 and snr-7/lsm7. Component of the heptameric LSM2-LSM8 complex, which consists of snr-2/lsm2, snr-3/lsm3, snr-4/lsm4, snr-5/lsm5, snr-6/lsm6, snr-7/lsm7 and snr-8/lsm8. The LSm subunits form a seven-membered ring structure with a doughnut shape.

It is found in the cytoplasm. The protein resides in the nucleus. In terms of biological role, component of LSm protein complexes, which are involved in RNA processing and may function in a chaperone-like manner, facilitating the efficient association of RNA processing factors with their substrates. Component of the cytoplasmic LSM1-LSM7 complex, which is thought to be involved in mRNA degradation by activating the decapping step in the 5'-to-3' mRNA decay pathway. Component of the nuclear LSM2-LSM8 complex, which is involved in splicing of nuclear mRNAs. LSM2-LSM8 associates with multiple snRNP complexes containing the U6 snRNA (U4/U6 di-snRNP, spliceosomal U4/U6.U5 tri-snRNP, and free U6 snRNP). It binds directly to the 3'-terminal U-tract of U6 snRNA and plays a role in the biogenesis and stability of the U6 snRNP and U4/U6 snRNP complexes. LSM2-LSM8 probably also is involved degradation of nuclear pre-mRNA by targeting them for decapping, and in processing of pre-tRNAs, pre-rRNAs and U3 snoRNA. In Neurospora crassa (strain ATCC 24698 / 74-OR23-1A / CBS 708.71 / DSM 1257 / FGSC 987), this protein is U6 snRNA-associated Sm-like protein LSm6 (snr-6).